Reading from the N-terminus, the 92-residue chain is Small ribosomal subunit protein uS19 (92 aa).

It belongs to the universal ribosomal protein uS19 family.

In terms of biological role, protein S19 forms a complex with S13 that binds strongly to the 16S ribosomal RNA. The sequence is that of Small ribosomal subunit protein uS19 from Streptococcus pyogenes serotype M49 (strain NZ131).